We begin with the raw amino-acid sequence, 325 residues long: Tagatose 1,6-diphosphate aldolase (325 aa).

The protein belongs to the aldolase LacD family.

It catalyses the reaction D-tagatofuranose 1,6-bisphosphate = D-glyceraldehyde 3-phosphate + dihydroxyacetone phosphate. Its pathway is carbohydrate metabolism; D-tagatose 6-phosphate degradation; D-glyceraldehyde 3-phosphate and glycerone phosphate from D-tagatose 6-phosphate: step 2/2. This is Tagatose 1,6-diphosphate aldolase from Staphylococcus haemolyticus (strain JCSC1435).